Reading from the N-terminus, the 513-residue chain is GMP synthase [glutamine-hydrolyzing] (513 aa).

In terms of domain architecture, Glutamine amidotransferase type-1 spans 3–192 (TVVVLDYGSQ…VSKVAKMEKN (190 aa)). Cysteine 80 acts as the Nucleophile in catalysis. Residues histidine 166 and glutamate 168 contribute to the active site. The 196-residue stretch at 193–388 (WKMTDFIEEK…LGLPDEMINR (196 aa)) folds into the GMPS ATP-PPase domain. 220 to 226 (SGGVDSS) contributes to the ATP binding site.

In terms of assembly, homodimer.

It carries out the reaction XMP + L-glutamine + ATP + H2O = GMP + L-glutamate + AMP + diphosphate + 2 H(+). It functions in the pathway purine metabolism; GMP biosynthesis; GMP from XMP (L-Gln route): step 1/1. In terms of biological role, catalyzes the synthesis of GMP from XMP. The sequence is that of GMP synthase [glutamine-hydrolyzing] from Thermosipho africanus (strain TCF52B).